The sequence spans 398 residues: Cytochrome b (398 aa).

4 consecutive transmembrane segments (helical) span residues 38-58 (FGPLAGICLVIQIVTGVFLAM), 82-104 (WFLRYMHANGASMFLIVVHFHMF), 119-139 (VRCSGVVIFLLMIVTAFIGYV), and 185-205 (FFSLHYLLPFLLVGASILHLG). Histidine 88 and histidine 102 together coordinate heme b. Heme b contacts are provided by histidine 189 and histidine 203. Histidine 208 serves as a coordination point for a ubiquinone. Helical transmembrane passes span 231-251 (YYVKDLVGWVAFAIFSSIFIF), 295-316 (AGGVAAIAPVFICLLALPFLNQ), 328-348 (IYHIIYLLFLADRLLLGWIGC), and 355-374 (FVTIGQISPFVFFLFFAIMP).

It belongs to the cytochrome b family. As to quaternary structure, the main subunits of complex b-c1 are: cytochrome b, cytochrome c1 and the Rieske protein. The cofactor is heme b.

The protein resides in the mitochondrion inner membrane. Component of the ubiquinol-cytochrome c reductase complex (complex III or cytochrome b-c1 complex) that is part of the mitochondrial respiratory chain. The b-c1 complex mediates electron transfer from ubiquinol to cytochrome c. Contributes to the generation of a proton gradient across the mitochondrial membrane that is then used for ATP synthesis. This Daucus carota (Wild carrot) protein is Cytochrome b (MT-CYB).